Here is a 275-residue protein sequence, read N- to C-terminus: Small ribosomal subunit protein uS2 (275 aa).

A disordered region spans residues 226 to 275 (AAAPNSASVREEEFSAEAGDEGKGRRAPAKKATEKKADAPAAAPEAPAAE). A compositionally biased stretch (low complexity) spans 264–275 (APAAAPEAPAAE).

Belongs to the universal ribosomal protein uS2 family.

The polypeptide is Small ribosomal subunit protein uS2 (Xanthomonas campestris pv. campestris (strain 8004)).